The chain runs to 485 residues: Glutamyl-tRNA(Gln) amidotransferase subunit A (485 aa).

Catalysis depends on charge relay system residues K78 and S153. Catalysis depends on S177, which acts as the Acyl-ester intermediate.

This sequence belongs to the amidase family. GatA subfamily. As to quaternary structure, heterotrimer of A, B and C subunits.

The catalysed reaction is L-glutamyl-tRNA(Gln) + L-glutamine + ATP + H2O = L-glutaminyl-tRNA(Gln) + L-glutamate + ADP + phosphate + H(+). Allows the formation of correctly charged Gln-tRNA(Gln) through the transamidation of misacylated Glu-tRNA(Gln) in organisms which lack glutaminyl-tRNA synthetase. The reaction takes place in the presence of glutamine and ATP through an activated gamma-phospho-Glu-tRNA(Gln). This is Glutamyl-tRNA(Gln) amidotransferase subunit A from Trichlorobacter lovleyi (strain ATCC BAA-1151 / DSM 17278 / SZ) (Geobacter lovleyi).